Here is a 249-residue protein sequence, read N- to C-terminus: ATP synthase subunit a, chloroplastic (249 aa).

Transmembrane regions (helical) follow at residues 38-58 (GQVLITSWVVMAIIIITSVIA), 97-117 (VPFVGTLFLFIFISNWSGALI), 136-156 (INTTVALALLTSVAYFYAGLS), 201-221 (LVVAVLISLVPLVIPVPMMLL), and 222-242 (GLFTSGIQALIFATLAAAYIG).

Belongs to the ATPase A chain family. F-type ATPases have 2 components, CF(1) - the catalytic core - and CF(0) - the membrane proton channel. CF(1) has five subunits: alpha(3), beta(3), gamma(1), delta(1), epsilon(1). CF(0) has four main subunits: a, b, b' and c.

It localises to the plastid. It is found in the chloroplast thylakoid membrane. Functionally, key component of the proton channel; it plays a direct role in the translocation of protons across the membrane. The chain is ATP synthase subunit a, chloroplastic from Chlorokybus atmophyticus (Soil alga).